The primary structure comprises 1353 residues: Stress response protein NST1 (1353 aa).

The segment covering 1–12 (MSSKSQQPPTGL) has biased composition (polar residues). Disordered regions lie at residues 1 to 66 (MSSK…FFNF), 216 to 422 (NANA…TQSS), 503 to 522 (NGLR…VEVD), 531 to 618 (DHRA…SFGS), 652 to 694 (RRSV…AEEG), 727 to 882 (LREL…AKET), 979 to 1119 (GLKS…DDAF), 1140 to 1276 (GSLI…GAGV), and 1308 to 1337 (GGTA…HQQQ). The span at 16–25 (AAKKRAKKAA) shows a compositional bias: basic residues. Positions 26 to 45 (KQSQNPQPQSAPQTSSQTPA) are enriched in low complexity. The segment covering 46–59 (SVPPLPPASVPDPL) has biased composition (pro residues). The span at 218–229 (NARSFPSPQQTI) shows a compositional bias: polar residues. Positions 242–254 (REEEYDDEEEIEE) are enriched in acidic residues. Over residues 268–277 (KKNKKKKKKG) the composition is skewed to basic residues. The segment covering 287–300 (VEPPAPLPPLPPPS) has biased composition (pro residues). Over residues 317–330 (LPTHQPQPLSQQPP) the composition is skewed to low complexity. A compositionally biased stretch (pro residues) spans 331-349 (SLNPLPPPAPASAPTPTPP). Positions 368–388 (PARSARAAGKAPASAAPPHNA) are enriched in low complexity. Positions 531 to 541 (DHRAPELHDHD) are enriched in basic and acidic residues. Residues 542 to 583 (PDDLDGEESEEYDDDDDYADDDELDDDDIGTDEADVGDEIDE) show a composition bias toward acidic residues. Basic and acidic residues predominate over residues 654–665 (SVREEQNLRDMQ). Residues 666–681 (EETDEEEEEEDDDESR) are compositionally biased toward acidic residues. 3 stretches are compositionally biased toward basic and acidic residues: residues 682-694 (DEPM…AEEG), 727-750 (LREL…EAQK), and 760-882 (QKAE…AKET). Residues 713–944 (AYRERVAKQR…AAQQAQRERA (232 aa)) adopt a coiled-coil conformation. Residues 1009–1021 (TNATPGRSMQKTP) are compositionally biased toward polar residues. Over residues 1154 to 1165 (PTPPAPIAPPNL) the composition is skewed to pro residues. 2 stretches are compositionally biased toward polar residues: residues 1174–1187 (SDGQ…LRST) and 1209–1220 (QPQQRRPTTSWD).

Belongs to the NST1 family.

Its subcellular location is the cytoplasm. Functionally, may act as a negative regulator of salt tolerance. In Cryptococcus neoformans var. neoformans serotype D (strain B-3501A) (Filobasidiella neoformans), this protein is Stress response protein NST1 (NST1).